The primary structure comprises 511 residues: Phosphomethylpyrimidine synthase (511 aa).

Residues N127, M156, Y185, H221, 241 to 243 (SRG), 282 to 285 (DGLR), and E321 each bind substrate. H325 is a Zn(2+) binding site. Y348 is a binding site for substrate. H389 provides a ligand contact to Zn(2+). Residues C469, C472, and C477 each coordinate [4Fe-4S] cluster. The tract at residues 492–511 (KGMEEKSEVTICNRKKESGK) is disordered.

It belongs to the ThiC family. It depends on [4Fe-4S] cluster as a cofactor.

The catalysed reaction is 5-amino-1-(5-phospho-beta-D-ribosyl)imidazole + S-adenosyl-L-methionine = 4-amino-2-methyl-5-(phosphooxymethyl)pyrimidine + CO + 5'-deoxyadenosine + formate + L-methionine + 3 H(+). The protein operates within cofactor biosynthesis; thiamine diphosphate biosynthesis. Its function is as follows. Catalyzes the synthesis of the hydroxymethylpyrimidine phosphate (HMP-P) moiety of thiamine from aminoimidazole ribotide (AIR) in a radical S-adenosyl-L-methionine (SAM)-dependent reaction. The sequence is that of Phosphomethylpyrimidine synthase from Leptospira borgpetersenii serovar Hardjo-bovis (strain JB197).